A 323-amino-acid chain; its full sequence is ADP-L-glycero-D-manno-heptose-6-epimerase (323 aa).

NADP(+) is bound by residues 10-11 (FI), 31-32 (DN), Lys-38, Arg-53, 75-79 (MGACS), and Asn-92. Residue Tyr-143 is the Proton acceptor of the active site. Residue Lys-147 participates in NADP(+) binding. Residue Asn-170 coordinates substrate. 2 residues coordinate NADP(+): Val-171 and Lys-179. Lys-179 (proton acceptor) is an active-site residue. Substrate-binding positions include Asp-181, Lys-188, 202–205 (FRSC), Arg-216, and Tyr-281.

It belongs to the NAD(P)-dependent epimerase/dehydratase family. HldD subfamily. In terms of assembly, homopentamer. NADP(+) serves as cofactor.

It catalyses the reaction ADP-D-glycero-beta-D-manno-heptose = ADP-L-glycero-beta-D-manno-heptose. It participates in nucleotide-sugar biosynthesis; ADP-L-glycero-beta-D-manno-heptose biosynthesis; ADP-L-glycero-beta-D-manno-heptose from D-glycero-beta-D-manno-heptose 7-phosphate: step 4/4. Its function is as follows. Catalyzes the interconversion between ADP-D-glycero-beta-D-manno-heptose and ADP-L-glycero-beta-D-manno-heptose via an epimerization at carbon 6 of the heptose. The chain is ADP-L-glycero-D-manno-heptose-6-epimerase from Nitratidesulfovibrio vulgaris (strain ATCC 29579 / DSM 644 / CCUG 34227 / NCIMB 8303 / VKM B-1760 / Hildenborough) (Desulfovibrio vulgaris).